A 380-amino-acid polypeptide reads, in one-letter code: Alpha-N-acetylneuraminate alpha-2,8-sialyltransferase ST8SIA3 (380 aa).

At 1–17 (MRNCKMARVASVLGLVM) the chain is on the cytoplasmic side. Residues 18 to 33 (LSVALLILSLISYVSL) form a helical; Signal-anchor for type II membrane protein membrane-spanning segment. Residues 34-380 (KKENIFTTPK…LTKLTLSHCA (347 aa)) are Lumenal-facing. 2 N-linked (GlcNAc...) asparagine glycosylation sites follow: Asn93 and Asn113. 2 disulfide bridges follow: Cys162-Cys313 and Cys176-Cys379. Residues Asn167 and Asn190 each coordinate CMP-N-acetyl-beta-neuraminate. A glycan (N-linked (GlcNAc...) asparagine) is linked at Asn206. Positions 300, 301, 302, 322, 336, and 337 each coordinate CMP-N-acetyl-beta-neuraminate. The Proton donor/acceptor role is filled by His354.

This sequence belongs to the glycosyltransferase 29 family. In terms of assembly, homodimer. Expressed in neurons in brain with higher expression in the striatum than in the hippocampus, cortex, and cerebellum (at protein level). Expressed in testes.

The protein resides in the golgi apparatus membrane. It carries out the reaction a ganglioside GM3 (d18:1(4E)) + CMP-N-acetyl-beta-neuraminate = a ganglioside GD3 (d18:1(4E)) + CMP + H(+). The enzyme catalyses a ganglioside GM3 + CMP-N-acetyl-beta-neuraminate = a ganglioside GD3 + CMP + H(+). It catalyses the reaction an N-acetyl-alpha-neuraminyl-(2-&gt;3)-beta-D-galactosyl derivative + CMP-N-acetyl-beta-neuraminate = an N-acetyl-alpha-neuraminyl-(2-&gt;8)-N-acetyl-alpha-neuraminyl-(2-&gt;3)-beta-D-galactosyl derivative + CMP + H(+). The catalysed reaction is an N-acetyl-alpha-neuraminyl-(2-&gt;3)-beta-D-galactosyl-(1-&gt;4)-N-acetyl-beta-D-glucosaminyl derivative + CMP-N-acetyl-beta-neuraminate = an alpha-Neu5Ac-(2-&gt;8)-alpha-Neu5Ac-(2-&gt;3)-beta-D-Gal-(1-&gt;4)-beta-D-GlcNAc derivative + CMP + H(+). It functions in the pathway protein modification; protein glycosylation. Its function is as follows. Catalyzes the transfer of sialic acid from a CMP-linked sialic acid donor onto a terminal alpha-2,3-, alpha-2,6-, or alpha-2,8-linked sialic acid of an acceptor, such as N-linked oligosaccharides of glycoproteins and glycolipids through alpha-2,8-linkages. Forms oligosialic and polysialic acid on various sialylated N-acetyllactosamine oligosaccharides of glycoproteins, including FETUB N-glycans, a2-HS-glycoprotein (AHSG) and alpha 2,3-sialylated glycosphingolipids, such as alpha 2,3-sialylparagloboside and ganglioside GM3 and to a lesser extent NCAM1 N-glycans. However, it is much more specific to N-linked oligosaccharides of glycoproteins than glycosphingolipids. 2,3-sialylparagloboside served as the best acceptor substrate among the glycolipids. alpha-Neu5Ac-(2-&gt;8)-alpha-Neu5Ac-(2-&gt;3)-beta-D-Gal-(1-&gt;4)-6S-D-GlcNAc and monosialyl and disialyl N-acetyllactosamines are the best acceptor substrates among glycoproteins. May play critical role in the striatum by mediating the formation of disialylated and trisialylated terminal glycotopes on N- and O-glycans of specific striatal proteins, regulating their distribution in lipid rafts, affecting their interaction with other binding partners, and subsequently modulating striatal functions. The chain is Alpha-N-acetylneuraminate alpha-2,8-sialyltransferase ST8SIA3 from Mus musculus (Mouse).